The chain runs to 339 residues: Probable scoulerine-9-O-methyltransferase OMT3B (339 aa).

M161 contributes to the S-adenosyl-L-methionine binding site. A substrate-binding site is contributed by D164. Residues T165, G191, D214, 228–229 (DV), and K242 each bind S-adenosyl-L-methionine. Residue 243–247 (SILHE) participates in substrate binding. The active-site Proton acceptor is H246.

It belongs to the class I-like SAM-binding methyltransferase superfamily. Cation-independent O-methyltransferase family. COMT subfamily.

The enzyme catalyses (S)-scoulerine + S-adenosyl-L-methionine = (S)-tetrahydrocolumbamine + S-adenosyl-L-homocysteine + H(+). Its pathway is alkaloid biosynthesis. In terms of biological role, methyltransferase involved in the biosynthesis of the benzylisoquinoline alkaloid noscapine. Catalyzes the conversion of (S)-scoulerine to (S)-tetrahydrocolumbamine. This is Probable scoulerine-9-O-methyltransferase OMT3B from Papaver somniferum (Opium poppy).